We begin with the raw amino-acid sequence, 196 residues long: Oplophorus-luciferin 2-monooxygenase catalytic subunit (196 aa).

An N-terminal signal peptide occupies residues 1-27 (MAYSTLFIIALTAVVTQASSTQKSNLT).

As to quaternary structure, heterotetramer of a catalytic 19 kDa and a non-catalytic 35 kDa subunit.

The protein resides in the secreted. It carries out the reaction coelenterazine + O2 = coelenteramide + hnu + CO2. Inhibited by micromolar Cu(2+). In terms of biological role, catalytic subunit of oplophorus-luciferin 2-monooxygenase. Oxidoreductase that converts coelenterazine (the oplophorus luciferin) to coelenteramide under emission of blue light with a maximum at 454 nm. Is also active with bisdeoxycoelenterazine. This chain is Oplophorus-luciferin 2-monooxygenase catalytic subunit, found in Oplophorus gracilirostris (Luminous shrimp).